The primary structure comprises 251 residues: Probable transcriptional regulatory protein MRA_2631 (251 aa).

It belongs to the TACO1 family.

The protein localises to the cytoplasm. The protein is Probable transcriptional regulatory protein MRA_2631 of Mycobacterium tuberculosis (strain ATCC 25177 / H37Ra).